Consider the following 146-residue polypeptide: Large ribosomal subunit protein uL15 (146 aa).

The tract at residues 1 to 51 is disordered; it reads MKLHELQPAPGSRKKAVRVGRGIGSGNGKTSGRGQKGQNARSGGGVRLGFE. Composition is skewed to gly residues over residues 21–35 and 42–51; these read RGIGSGNGKTSGRGQ and SGGGVRLGFE.

It belongs to the universal ribosomal protein uL15 family. In terms of assembly, part of the 50S ribosomal subunit.

Binds to the 23S rRNA. The sequence is that of Large ribosomal subunit protein uL15 from Geobacillus kaustophilus (strain HTA426).